The chain runs to 163 residues: MAPITLSQIDEDLKDVIQTFFEIQSAVHGYLGPETQQELVKKLKSLTVSLQTLSAHAAPDPSYVQSPPSRTGLSPADPPVQSIQLPPEIIDYVDAARNPDIYTREFVELVQKSNQELKGKMEAFASFRDVLAKEMASAMPECKKEVERVVKATGGSVDGGGCG.

The tract at residues 57-79 (AAPDPSYVQSPPSRTGLSPADPP) is disordered. The span at 63 to 72 (YVQSPPSRTG) shows a compositional bias: polar residues.

This sequence belongs to the Mediator complex subunit 10 family. In terms of assembly, component of the Mediator complex.

It is found in the nucleus. Component of the Mediator complex, a coactivator involved in the regulated transcription of nearly all RNA polymerase II-dependent genes. Mediator functions as a bridge to convey information from gene-specific regulatory proteins to the basal RNA polymerase II transcription machinery. Mediator is recruited to promoters by direct interactions with regulatory proteins and serves as a scaffold for the assembly of a functional preinitiation complex with RNA polymerase II and the general transcription factors. The chain is Mediator of RNA polymerase II transcription subunit 10 (NUT2) from Coccidioides immitis (strain RS) (Valley fever fungus).